A 794-amino-acid chain; its full sequence is DNA ligase (794 aa).

NAD(+)-binding positions include 35–39 (DAEYD), 84–85 (SL), and E126. The active-site N6-AMP-lysine intermediate is the K128. Residues R149, E186, K302, and K326 each coordinate NAD(+). The Zn(2+) site is built by C420, C423, C450, and C456. The BRCT domain maps to 711–794 (VEGLPLAGQT…KLFDEHGVAR (84 aa)).

The protein belongs to the NAD-dependent DNA ligase family. LigA subfamily. It depends on Mg(2+) as a cofactor. Requires Mn(2+) as cofactor.

It catalyses the reaction NAD(+) + (deoxyribonucleotide)n-3'-hydroxyl + 5'-phospho-(deoxyribonucleotide)m = (deoxyribonucleotide)n+m + AMP + beta-nicotinamide D-nucleotide.. Its function is as follows. DNA ligase that catalyzes the formation of phosphodiester linkages between 5'-phosphoryl and 3'-hydroxyl groups in double-stranded DNA using NAD as a coenzyme and as the energy source for the reaction. It is essential for DNA replication and repair of damaged DNA. The chain is DNA ligase from Pseudomonas aeruginosa (strain LESB58).